We begin with the raw amino-acid sequence, 345 residues long: Ferrochelatase (345 aa).

Residues His215 and Glu296 each coordinate Fe cation.

Belongs to the ferrochelatase family.

The protein localises to the cytoplasm. It catalyses the reaction heme b + 2 H(+) = protoporphyrin IX + Fe(2+). Its pathway is porphyrin-containing compound metabolism; protoheme biosynthesis; protoheme from protoporphyrin-IX: step 1/1. In terms of biological role, catalyzes the ferrous insertion into protoporphyrin IX. The sequence is that of Ferrochelatase from Rhodopseudomonas palustris (strain BisB5).